The following is a 735-amino-acid chain: MENQNRQNAAQCPFHGSVTNQSSNRTTNKDWWPNQLNLSILHQHDRKTNPHDEEFNYAEEFQKLDYWALKEDLRKLMTESQDWWPADYGHYGPLFIRMAWHSAGTYRIGDGRGGASTGTQRFAPLNSWPDNANLDKARRLLWPIKKKYGNKISWADLFILAGNVAIESMGGKTIGFGGGRVDVWHPEEDVYWGSEKEWLASERYSGDRELENPLAAVQMGLIYVNPEGPDGKPDPKAAARDIRETFRRMGMNDEETVALIAGGHTFGKAHGAGPATHVGPEPEAAPIEAQGLGWISSYGKGKGSDTITSGIEGAWTPTPTQWDTSYFDMLFGYDWWLTKSPAGAWQWMAVDPDEKDLAPDAEDPSKKVPTMMMTTDLALRFDPEYEKIARRFHQNPEEFAEAFARAWFKLTHRDMGPKTRYLGPEVPKEDFIWQDPIPEVDYELTEAEIEEIKAKILNSGLTVSELVKTAWASASTFRNSDKRGGANGARIRLAPQKDWEVNEPERLAKVLSVYEDIQRELPKKVSIADLIVLGGSAAVEKAARDAGFDVKVPFFPGRGDATQEQTDVESFAVLEPFADGFRNYQKQEYSVPPEELLVDKAQLLGLTAPEMTVLVGGLRVLGANYRDLPHGVFTDRIGVLTNDFFVNLLDMNYEWVPTDSGIYEIRDRKTGEVRWTATRVDLIFGSNSILRSYAEFYAQDDNQEKFVRDFINAWVKVMNADRFDLVKKARESVTA.

Polar residues-rich tracts occupy residues 1-10 (MENQNRQNAA) and 17-26 (SVTNQSSNRT). The interval 1-30 (MENQNRQNAAQCPFHGSVTNQSSNRTTNKD) is disordered. Residues 100 to 223 (WHSAGTYRIG…LAAVQMGLIY (124 aa)) constitute a cross-link (tryptophyl-tyrosyl-methioninium (Trp-Tyr) (with M-249)). H101 serves as the catalytic Proton acceptor. The tryptophyl-tyrosyl-methioninium (Tyr-Met) (with W-100) cross-link spans 223 to 249 (YVNPEGPDGKPDPKAAARDIRETFRRM). Residue H264 coordinates heme b.

The protein belongs to the peroxidase family. Peroxidase/catalase subfamily. Homodimer or homotetramer. Requires heme b as cofactor. Formation of the three residue Trp-Tyr-Met cross-link is important for the catalase, but not the peroxidase activity of the enzyme.

The catalysed reaction is H2O2 + AH2 = A + 2 H2O. It carries out the reaction 2 H2O2 = O2 + 2 H2O. Bifunctional enzyme with both catalase and broad-spectrum peroxidase activity. Also displays NADH oxidase, INH lyase and isonicotinoyl-NAD synthase activities. The chain is Catalase-peroxidase from Geobacillus stearothermophilus (Bacillus stearothermophilus).